We begin with the raw amino-acid sequence, 145 residues long: Putative phosphatidylglycerol/phosphatidylinositol transfer protein DDB_G0282179 (145 aa).

The signal sequence occupies residues 1–20; it reads MIKTILLLLINFMLILIVNG. Asn134 carries N-linked (GlcNAc...) asparagine glycosylation.

The protein belongs to the NPC2 family. As to quaternary structure, monomer.

Functionally, catalyzes the intermembrane transfer of phosphatidylglycerol and phosphatidylinositol. The protein is Putative phosphatidylglycerol/phosphatidylinositol transfer protein DDB_G0282179 of Dictyostelium discoideum (Social amoeba).